A 252-amino-acid chain; its full sequence is Small ribosomal subunit protein uS2A (252 aa).

Serine 2 is modified (N-acetylserine). Residues 209–252 form a disordered region; it reads EVEQQVAEEATTEEAGEEEAKEEVTEEQAEATEWAEENADNVEW. The segment covering 218–252 has biased composition (acidic residues); it reads ATTEEAGEEEAKEEVTEEQAEATEWAEENADNVEW.

It belongs to the universal ribosomal protein uS2 family. In terms of assembly, component of the small ribosomal subunit. Mature ribosomes consist of a small (40S) and a large (60S) subunit. The 40S subunit contains about 33 different proteins and 1 molecule of RNA (18S). The 60S subunit contains about 49 different proteins and 3 molecules of RNA (25S, 5.8S and 5S). Interacts with RPS21.

The protein localises to the cytoplasm. Functionally, required for the assembly and/or stability of the 40S ribosomal subunit. Required for the processing of the 20S rRNA-precursor to mature 18S rRNA in a late step of the maturation of 40S ribosomal subunits. The chain is Small ribosomal subunit protein uS2A from Saccharomyces cerevisiae (strain RM11-1a) (Baker's yeast).